The sequence spans 382 residues: 1-deoxy-D-xylulose 5-phosphate reductoisomerase (382 aa).

6 residues coordinate NADPH: T10, G11, S12, I13, N38, and N120. Residue K121 participates in 1-deoxy-D-xylulose 5-phosphate binding. E122 is an NADPH binding site. D146 contacts Mn(2+). The 1-deoxy-D-xylulose 5-phosphate site is built by S147, E148, S172, and H195. Position 148 (E148) interacts with Mn(2+). G201 contacts NADPH. S208, N213, K214, and E217 together coordinate 1-deoxy-D-xylulose 5-phosphate. Mn(2+) is bound at residue E217.

Belongs to the DXR family. Mg(2+) serves as cofactor. Mn(2+) is required as a cofactor.

It catalyses the reaction 2-C-methyl-D-erythritol 4-phosphate + NADP(+) = 1-deoxy-D-xylulose 5-phosphate + NADPH + H(+). Its pathway is isoprenoid biosynthesis; isopentenyl diphosphate biosynthesis via DXP pathway; isopentenyl diphosphate from 1-deoxy-D-xylulose 5-phosphate: step 1/6. Functionally, catalyzes the NADPH-dependent rearrangement and reduction of 1-deoxy-D-xylulose-5-phosphate (DXP) to 2-C-methyl-D-erythritol 4-phosphate (MEP). This is 1-deoxy-D-xylulose 5-phosphate reductoisomerase from Thermoanaerobacter pseudethanolicus (strain ATCC 33223 / 39E) (Clostridium thermohydrosulfuricum).